Consider the following 472-residue polypeptide: Flotillin-like protein 6 (472 aa).

Residue Cys-37 is the site of S-palmitoyl cysteine attachment. The stretch at 237–327 (ENQREAEVAQ…ELYKKQKEAE (91 aa)) forms a coiled coil.

The protein belongs to the band 7/mec-2 family. Flotillin subfamily. Post-translationally, may be palmitoylated. As to expression, very low occasional expression in roots and nodules.

It localises to the cell membrane. Its subcellular location is the membrane. It is found in the caveola. Functionally, may act as a scaffolding protein within caveolar membranes, functionally participating in formation of caveolae or caveolae-like vesicles. May be involved in nodule formation. The sequence is that of Flotillin-like protein 6 (FLOT6) from Medicago truncatula (Barrel medic).